Here is a 166-residue protein sequence, read N- to C-terminus: Thioredoxin, mitochondrial (166 aa).

The transit peptide at 1–59 (MAQRLLLRRFLTSVISRKPPQGVWASLTSTSLQTPPYNAGGLTGTPSPARTFHTTRVCS) directs the protein to the mitochondrion. Residues 61–166 (TFNVQDGPDF…LEAFLKKLIG (106 aa)) form the Thioredoxin domain. Active-site nucleophile residues include Cys90 and Cys93. Cys90 and Cys93 are joined by a disulfide. Lys152 carries the post-translational modification N6-acetyllysine; alternate. Residue Lys152 is modified to N6-succinyllysine; alternate.

It belongs to the thioredoxin family. In terms of assembly, monomer. Expressed in several tissues with the highest expression levels in heart, muscle, kidney and adrenal gland.

It localises to the mitochondrion. Its function is as follows. Important for the control of mitochondrial reactive oxygen species homeostasis, apoptosis regulation and cell viability. Is involved in various redox reactions including the reduction of protein disulfide bonds, through the reversible oxidation of its active center dithiol to a disulfide. In Rattus norvegicus (Rat), this protein is Thioredoxin, mitochondrial (Txn2).